Consider the following 407-residue polypeptide: Probable acyl-CoA dehydrogenase FadE2 (407 aa).

Belongs to the acyl-CoA dehydrogenase family. It depends on FAD as a cofactor.

It carries out the reaction a 2,3-saturated acyl-CoA + A = a 2,3-dehydroacyl-CoA + AH2. The protein is Probable acyl-CoA dehydrogenase FadE2 of Mycobacterium tuberculosis (strain ATCC 25618 / H37Rv).